Consider the following 1041-residue polypeptide: Importin-9 (1041 aa).

The residue at position 2 (alanine 2) is an N-acetylalanine. Residues 43 to 119 (AEEQIKVLEV…RELLPNGLRE (77 aa)) form the Importin N-terminal domain. Positions 936-967 (QATPAEWSQDDSNDMWEDQEEEEEEEEDGLAG) are disordered. Residues 943-964 (SQDDSNDMWEDQEEEEEEEEDG) are compositionally biased toward acidic residues.

The protein belongs to the importin beta family. In terms of assembly, interacts with histones H2A, H2B, H3 and H4. The binding is coupled to RanGTP cycles. Interacts with AKIRIN2; promoting association with pre-assembled proteasomes. Associates with pre-assembled proteasomes; interaction is indirect and mediated via interaction with AKIRIN2. Interacts with PPP2R1A and PPP2R1B.

It localises to the cytoplasm. It is found in the nucleus. Functionally, nuclear transport receptor that mediates nuclear import of proteins, such as histones, proteasome and actin. Serves as receptor for nuclear localization signals (NLS) in cargo substrates. Is thought to mediate docking of the importin/substrate complex to the nuclear pore complex (NPC) through binding to nucleoporin and the complex is subsequently translocated through the pore by an energy requiring, Ran-dependent mechanism. At the nucleoplasmic side of the NPC, Ran binds to the importin, the importin/substrate complex dissociates and importin is re-exported from the nucleus to the cytoplasm where GTP hydrolysis releases Ran. The directionality of nuclear import is thought to be conferred by an asymmetric distribution of the GTP- and GDP-bound forms of Ran between the cytoplasm and nucleus. Mediates the import of pre-assembled proteasomes into the nucleus; AKIRIN2 acts as a molecular bridge between IPO9 and the proteasome complex. Mediates the nuclear import of histones H2A, H2B, H4 and H4. In addition to nuclear import, also acts as a chaperone for histones by preventing inappropriate non-nucleosomal interactions. Mediates the nuclear import of actin. In Homo sapiens (Human), this protein is Importin-9.